The following is a 436-amino-acid chain: Trigger factor (436 aa).

The region spanning 163 to 248 (GDRVTLDFAG…VKEVAEGVLP (86 aa)) is the PPIase FKBP-type domain.

This sequence belongs to the FKBP-type PPIase family. Tig subfamily.

It localises to the cytoplasm. The enzyme catalyses [protein]-peptidylproline (omega=180) = [protein]-peptidylproline (omega=0). Its function is as follows. Involved in protein export. Acts as a chaperone by maintaining the newly synthesized protein in an open conformation. Functions as a peptidyl-prolyl cis-trans isomerase. The sequence is that of Trigger factor from Bordetella petrii (strain ATCC BAA-461 / DSM 12804 / CCUG 43448).